Reading from the N-terminus, the 145-residue chain is 3-dehydroquinate dehydratase (145 aa).

The active-site Proton acceptor is Tyr22. Substrate is bound by residues Asn71, His77, and Asp84. The active-site Proton donor is His97. Substrate is bound by residues 98–99 and Arg108; that span reads LS.

Belongs to the type-II 3-dehydroquinase family. In terms of assembly, homododecamer.

It carries out the reaction 3-dehydroquinate = 3-dehydroshikimate + H2O. The protein operates within metabolic intermediate biosynthesis; chorismate biosynthesis; chorismate from D-erythrose 4-phosphate and phosphoenolpyruvate: step 3/7. Functionally, catalyzes a trans-dehydration via an enolate intermediate. The protein is 3-dehydroquinate dehydratase of Francisella philomiragia subsp. philomiragia (strain ATCC 25017 / CCUG 19701 / FSC 153 / O#319-036).